Reading from the N-terminus, the 141-residue chain is Large ribosomal subunit protein uL11 (141 aa).

It belongs to the universal ribosomal protein uL11 family. As to quaternary structure, part of the ribosomal stalk of the 50S ribosomal subunit. Interacts with L10 and the large rRNA to form the base of the stalk. L10 forms an elongated spine to which L12 dimers bind in a sequential fashion forming a multimeric L10(L12)X complex. Post-translationally, one or more lysine residues are methylated.

Its function is as follows. Forms part of the ribosomal stalk which helps the ribosome interact with GTP-bound translation factors. The polypeptide is Large ribosomal subunit protein uL11 (Syntrophus aciditrophicus (strain SB)).